We begin with the raw amino-acid sequence, 1143 residues long: Probable ATP-dependent RNA helicase DHX34 (1143 aa).

Disordered regions lie at residues 1–24 and 75–94; these read MPPP…EEEA and TSRK…PALA. The span at 76 to 85 shows a compositional bias: basic and acidic residues; sequence SRKEEKDPGQ. One can recognise a Helicase ATP-binding domain in the interval 172–332; that stretch reads LQTLKEHQVV…FSNAPVVQVP (161 aa). 185–192 contributes to the ATP binding site; the sequence is GDTGCGKS. A DEAH box motif is present at residues 279–282; sequence DEVH. Residues 368 to 536 enclose the Helicase C-terminal domain; it reads SIDHKYPPEE…SLVLQMKSMS (169 aa). Residues 701–955 form a negatively regulates interaction with UPF1 region; that stretch reads QAAQVGDSYS…LRARWESALD (255 aa). Positions 724–766 are disordered; that stretch reads LKRQHEEGAGRRRKVLRLQEEQDGGSSDEDRAGPAPPGASDGV. A phosphoserine mark is found at Ser-749 and Ser-750. Residues 810-1143 are required for phosphorylation of UPF1. Not required for interaction with UPF1; that stretch reads PQLAVPDAFN…EVLRHRKQHV (334 aa). A required for the interaction with SMG1 and subsequent phosphorylation of UPF1 region spans residues 957–1143; that stretch reads QLAHQAQQQL…EVLRHRKQHV (187 aa).

Belongs to the DEAD box helicase family. DEAH subfamily. In terms of assembly, forms a complex with RUVBL1 and RUVBL2. Part of a complex composed of SMG1, DHX34 and UPF1; within the complex DHX34 acts as a scaffolding protein to facilitate SMG1 phosphorylation of UPF1. Interacts with UPF1, MOV10, EIF4A3, XRN2, SMG6, SMG7, SMG9, UPF3A, UPF3B, CASC3/MLN51, XRN1, DIS3 and DCP1A; the interactions are RNA-independent. Interacts with NCBP1/CPB80; the interaction is RNA-dependent. Interacts (via C-terminus) with SMG1; the interaction is RNA-independent. Expressed in whole blood, testis and spleen. Also expressed in the brain.

It carries out the reaction ATP + H2O = ADP + phosphate + H(+). Functionally, probable ATP-binding RNA helicase required for nonsense-mediated decay (NMD) degradation of mRNA transcripts containing premature stop codons. Promotes the phosphorylation of UPF1 along with its interaction with key NMD pathway proteins UPF2 and EIF4A3. Interaction with the RUVBL1-RUVBL2 complex results in loss of nucleotide binding ability and ATP hydrolysis of the complex. Negatively regulates the nucleotide binding ability and ATP hydrolysis of the RUVBL1-RUVBL2 complex via induction of N-terminus conformation changes of the RUVBL2 subunits. This Homo sapiens (Human) protein is Probable ATP-dependent RNA helicase DHX34.